The chain runs to 480 residues: Coronin-2B (480 aa).

7 WD repeats span residues 29 to 77, 78 to 127, 128 to 170, 171 to 212, 213 to 259, 260 to 305, and 306 to 345; these read HCFD…GRIE, PNYP…RNMT, EALL…LDVG, EPVK…PRSG, RVLQ…EDLS, MPLI…TEKP, and YLSY…KLVT. The stretch at 436 to 479 forms a coiled coil; the sequence is NELLRMFFRQQDEIRRLKEELAQKDIRIRQLQLELKNLRNSPKN.

The protein belongs to the WD repeat coronin family. As to quaternary structure, binds to F-actin and to vinculin. As to expression, expressed predominantly in brain.

It is found in the cytoplasm. Its subcellular location is the cytoskeleton. May play a role in the reorganization of neuronal actin structure. The chain is Coronin-2B (CORO2B) from Homo sapiens (Human).